Consider the following 457-residue polypeptide: Multidrug resistance protein MdtK (457 aa).

12 consecutive transmembrane segments (helical) span residues 11–31 (LLAL…MGFV), 53–73 (IWLP…PVIA), 93–113 (WLAG…GYII), 127–147 (AVGY…FQVA), 160–180 (GMVI…IFIY), 188–208 (LGGV…FIAM), 243–263 (LPIA…ALLV), 276–296 (IALN…AAVT), 314–334 (AART…IFTV), 357–377 (LMLL…GSGI), 387–407 (IFFI…YILA), and 418–438 (PAGF…MMML).

The protein belongs to the multi antimicrobial extrusion (MATE) (TC 2.A.66.1) family. MdtK subfamily.

It localises to the cell inner membrane. Multidrug efflux pump that functions probably as a Na(+)/drug antiporter. The sequence is that of Multidrug resistance protein MdtK from Citrobacter koseri (strain ATCC BAA-895 / CDC 4225-83 / SGSC4696).